The chain runs to 191 residues: MIRISDAAQAHFAKLLANQEEGTQIRVFVINPGTPNAECGVSYCPPDAVEATDTALKFDLLTAYVDELSAPYLEDAEIDFVTDQLGSQLTLKAPNAKMRKVADDAPLMERVEYMLQSQINPQLAGHGGRVSLMEITEDGYAILQFGGGCNGCSMVDVTLKEGIEKQLLNEFPELKGVRDLTEHQRGEHSYY.

Positions 149 and 152 each coordinate [4Fe-4S] cluster.

The protein belongs to the NfuA family. As to quaternary structure, homodimer. [4Fe-4S] cluster serves as cofactor.

Functionally, involved in iron-sulfur cluster biogenesis. Binds a 4Fe-4S cluster, can transfer this cluster to apoproteins, and thereby intervenes in the maturation of Fe/S proteins. Could also act as a scaffold/chaperone for damaged Fe/S proteins. In Escherichia coli O139:H28 (strain E24377A / ETEC), this protein is Fe/S biogenesis protein NfuA.